Reading from the N-terminus, the 221-residue chain is Endonuclease V (221 aa).

Mg(2+) is bound by residues aspartate 38 and aspartate 104.

The protein belongs to the endonuclease V family. Mg(2+) serves as cofactor.

The protein resides in the cytoplasm. It carries out the reaction Endonucleolytic cleavage at apurinic or apyrimidinic sites to products with a 5'-phosphate.. In terms of biological role, DNA repair enzyme involved in the repair of deaminated bases. Selectively cleaves double-stranded DNA at the second phosphodiester bond 3' to a deoxyinosine leaving behind the intact lesion on the nicked DNA. Recognizes only deoxyinosine. In Archaeoglobus fulgidus (strain ATCC 49558 / DSM 4304 / JCM 9628 / NBRC 100126 / VC-16), this protein is Endonuclease V.